A 1212-amino-acid chain; its full sequence is DNA-directed RNA polymerase subunit beta'' (1212 aa).

The Zn(2+) site is built by cysteine 229, cysteine 302, cysteine 309, and cysteine 312. Residues 1162–1212 form a disordered region; that stretch reads QKETSKNKKETSKNKKETSKNKKETSKNKKETSKNKKETSKNKKEASKNKK.

This sequence belongs to the RNA polymerase beta' chain family. RpoC2 subfamily. In plastids the minimal PEP RNA polymerase catalytic core is composed of four subunits: alpha, beta, beta', and beta''. When a (nuclear-encoded) sigma factor is associated with the core the holoenzyme is formed, which can initiate transcription. It depends on Zn(2+) as a cofactor.

The protein resides in the plastid. The protein localises to the chloroplast. It carries out the reaction RNA(n) + a ribonucleoside 5'-triphosphate = RNA(n+1) + diphosphate. In terms of biological role, DNA-dependent RNA polymerase catalyzes the transcription of DNA into RNA using the four ribonucleoside triphosphates as substrates. The protein is DNA-directed RNA polymerase subunit beta'' of Cryptomeria japonica (Japanese cedar).